The sequence spans 461 residues: Cysteine--tRNA ligase (461 aa).

Residue Cys-28 coordinates Zn(2+). The 'HIGH' region motif lies at 30–40; the sequence is ITVYDLCHIGH. Zn(2+) is bound by residues Cys-209, His-234, and Glu-238. A 'KMSKS' region motif is present at residues 266 to 270; that stretch reads KMSKS. ATP is bound at residue Lys-269.

Belongs to the class-I aminoacyl-tRNA synthetase family. In terms of assembly, monomer. It depends on Zn(2+) as a cofactor.

It localises to the cytoplasm. The catalysed reaction is tRNA(Cys) + L-cysteine + ATP = L-cysteinyl-tRNA(Cys) + AMP + diphosphate. The protein is Cysteine--tRNA ligase of Shigella boydii serotype 18 (strain CDC 3083-94 / BS512).